Consider the following 103-residue polypeptide: Thioredoxin-1 (103 aa).

Residues 2 to 103 (VTQFKTASEF…AIKQAIAANA (102 aa)) enclose the Thioredoxin domain. Residues Cys-30 and Cys-33 each act as nucleophile in the active site. Cys-30 and Cys-33 form a disulfide bridge. Residues Lys-54, Lys-66, and Lys-96 each participate in a glycyl lysine isopeptide (Lys-Gly) (interchain with G-Cter in ubiquitin) cross-link.

The protein belongs to the thioredoxin family. In terms of assembly, monomer. Part of the heterodimeric LMA1 complex together with the proteinase inhibitor PBI2. Most of the thioredoxin of yeast is in this complex rather than the well-studied monomer. LMA1 binds to the ATPase SEC18. Reversible disulfide bond formation between Cys-30 and Cys-33, reverted by thioredoxin reductase TRR1 using NADPH as hydrogen donor.

It is found in the nucleus. The protein localises to the cytoplasm. Its subcellular location is the golgi apparatus membrane. It localises to the mitochondrion intermembrane space. In terms of biological role, participates as a hydrogen donor in redox reactions through the reversible oxidation of its active center dithiol to a disulfide, accompanied by the transfer of 2 electrons and 2 protons. It is involved in many cellular processes, including deoxyribonucleotide synthesis, repair of oxidatively damaged proteins, protein folding, sulfur metabolism, and redox homeostasis. Thioredoxin-dependent enzymes include phosphoadenosine-phosphosulfate reductase MET16, alkyl-hydroperoxide reductase DOT5, thioredoxin peroxidases TSA1 and TSA2, alkyl hydroperoxide reductase AHP1, and peroxiredoxin HYR1. Thioredoxin is also involved in protection against reducing stress. As part of the LMA1 complex, it is involved in the facilitation of vesicle fusion such as homotypic vacuole and ER-derived COPII vesicle fusion with the Golgi. This activity does not require the redox mechanism. This Saccharomyces cerevisiae (strain ATCC 204508 / S288c) (Baker's yeast) protein is Thioredoxin-1 (TRX1).